The primary structure comprises 274 residues: MDAPGFTASLVAGGVAGVSVDLILFPLDTIKTRLQSPQGFNKAGGFRGIYAGVPSAAVGSFPNAAAFFLTYEYVKSLLHTDSTSHFKPVKHMLAASTGEVVACLIRVPSEVVKQRAQVSASSKTLQIFLTILSEEGIQGLYRGYKSTVLREIPFSLVQFPLWESLKALWAWRRGHVVDSWQSAVCGAFAGGFAAAVTTPLDVAKTRIMLAKAGSSTAVGNVLSAMHGVWRSQGLAGLFAGVLPRMAAISMGGFIFLGAYDQARSLLLEVGRKSP.

Solcar repeat units follow at residues 4-77 (PGFT…VKSL), 86-168 (FKPV…LKAL), and 177-265 (VDSW…ARSL). 6 consecutive transmembrane segments (helical) span residues 5–25 (GFTA…LILF), 49–69 (IYAG…AFFL), 85–105 (HFKP…ACLI), 142–162 (RGYK…FPLW), 182–202 (SAVC…PLDV), and 238–258 (FAGV…FLGA).

It belongs to the mitochondrial carrier (TC 2.A.29) family.

The protein resides in the mitochondrion inner membrane. It carries out the reaction S-adenosyl-L-homocysteine(out) + S-adenosyl-L-methionine(in) = S-adenosyl-L-homocysteine(in) + S-adenosyl-L-methionine(out). In terms of biological role, mitochondrial S-adenosyl-L-methionine/S-adenosyl-L-homocysteine antiporter. Mediates the exchange of cytosolic S-adenosyl-L-methionine, the predominant methyl-group donor for macromolecule methylation processes, for mitochondrial S-adenosylhomocysteine(SAH), a by-product of methylation reactions. This is Mitochondrial S-adenosylmethionine carrier protein from Mus musculus (Mouse).